The sequence spans 644 residues: Sodium/hydrogen exchanger 9 (644 aa).

The Lumenal segment spans residues 1-20 (MERQRRFMSEKDEYQFQHQG). A helical membrane pass occupies residues 21 to 41 (AVELLVFNFLLILTILTIWLF). Residues 42–45 (KNHR) are Cytoplasmic-facing. A helical membrane pass occupies residues 46 to 66 (FRFLHETGGAMVYGLIMGLIL). Residues 67–126 (RYATAPTDIESGTVYDCGKLAFSPSTLLINITDQVYEYKYKREISQHNINPHLGNAILEK) lie on the Lumenal side of the membrane. Residues 127 to 147 (MTFDPEIFFNVLLPPIIFHAG) form a helical membrane-spanning segment. Over 148-164 (YSLKKRHFFQNLGSILT) the chain is Cytoplasmic. Residues 165–185 (YAFLGTAISCIVIGLIMYGFV) traverse the membrane as a helical segment. The Lumenal segment spans residues 186–203 (KAMVYAGQLKNGDFHFTD). A helical membrane pass occupies residues 204–224 (CLFFGSLMSATDPVTVLAIFH). The Cytoplasmic portion of the chain corresponds to 225-235 (ELHVDPDLYTL). Residues 236-256 (LFGESVLNDAVAIVLTYSISI) traverse the membrane as a helical segment. Residues 257–277 (YSPKENPNAFDAAAFFQSVGN) are Lumenal-facing. Residues 278–298 (FLGIFAGSFAMGSAYAVVTAL) traverse the membrane as a helical segment. Residues 299 to 301 (LTK) are Cytoplasmic-facing. The next 2 helical transmembrane spans lie at 302 to 322 (FTKLCEFPMLETGLFFLLSWS) and 323 to 343 (AFLSAEAAGLTGIVAVLFCGV). At 344–364 (TQAHYTYNNLSLDSKMRTKQL) the chain is on the cytoplasmic side. Residues 365–385 (FEFMNFLAENVIFCYMGLALF) form a helical membrane-spanning segment. Residue Thr386 is a topological domain, lumenal. The chain crosses the membrane as a helical span at residues 387-407 (FQNHIFNALFILGAFLAIFVA). At 408 to 429 (RACNIYPLSFLLNLGRKHKIPW) the chain is on the cytoplasmic side. Residues 430-450 (NFQHMMMFSGLRGAIAFALAI) form a helical membrane-spanning segment. At 451-465 (RDTESQPKQMMFSTT) the chain is on the lumenal side. The helical transmembrane segment at 466 to 486 (LLLVFFTVWVFGGGTTPMLTW) threads the bilayer. Topologically, residues 487-644 (LQIRVGVDLD…EQTPGQSQLN (158 aa)) are cytoplasmic. A disordered region spans residues 593-622 (QAASPCSPPTRLGLDQKAAPQTPGKENIYE).

It belongs to the monovalent cation:proton antiporter 1 (CPA1) transporter (TC 2.A.36) family. Homodimer; phosphatidylinositol-4,5-bisphosphate (PIP2) and phosphatidylinositol 3,4,5-trisphosphate (PIP3) could be involved in the dimer stabilization. Interacts (via the C-terminus) with RACK1. Interacts with CHP1.

It is found in the late endosome membrane. The protein resides in the early endosome membrane. The protein localises to the recycling endosome membrane. Its subcellular location is the cell membrane. It localises to the cytoplasmic vesicle. It is found in the phagosome membrane. The enzyme catalyses Na(+)(in) + H(+)(out) = Na(+)(out) + H(+)(in). The catalysed reaction is K(+)(in) + H(+)(out) = K(+)(out) + H(+)(in). In terms of biological role, endosomal Na(+), K(+)/H(+) antiporter. Mediates the electroneutral exchange of endosomal luminal H(+) for a cytosolic Na(+) or K(+). By facilitating proton efflux, SLC9A9 counteracts the acidity generated by vacuolar (V)-ATPase, thereby limiting luminal acidification. Regulates organellar pH and consequently, endosome maturation and endocytic trafficking of plasma membrane receptors and neurotransporters. Promotes the recycling of transferrin receptors back to the cell surface to facilitate additional iron uptake in the brain. Regulates synaptic transmission by regulating the luminal pH of axonal endosomes. Regulates phagosome lumenal pH, thus affecting phagosome maturation, and consequently, microbicidal activity in macrophages. Can also be active at the cell surface of specialized cells, e.g., in the inner ear hair bundles uses the high K(+) of the endolymph to regulate intracelular pH. This is Sodium/hydrogen exchanger 9 (SLC9A9) from Equus caballus (Horse).